A 247-amino-acid polypeptide reads, in one-letter code: Large ribosomal subunit protein uL3 (247 aa).

Disordered regions lie at residues 124-145 (RLGQ…PGSM) and 218-247 (VGQE…ASAE). Basic and acidic residues predominate over residues 222–241 (VKAEAKDTASTEKKQAETKN).

It belongs to the universal ribosomal protein uL3 family. Part of the 50S ribosomal subunit. Forms a cluster with proteins L14 and L19.

One of the primary rRNA binding proteins, it binds directly near the 3'-end of the 23S rRNA, where it nucleates assembly of the 50S subunit. This is Large ribosomal subunit protein uL3 from Oenococcus oeni (strain ATCC BAA-331 / PSU-1).